Consider the following 420-residue polypeptide: Exodeoxyribonuclease 7 large subunit (420 aa).

It belongs to the XseA family. Heterooligomer composed of large and small subunits.

The protein localises to the cytoplasm. The catalysed reaction is Exonucleolytic cleavage in either 5'- to 3'- or 3'- to 5'-direction to yield nucleoside 5'-phosphates.. In terms of biological role, bidirectionally degrades single-stranded DNA into large acid-insoluble oligonucleotides, which are then degraded further into small acid-soluble oligonucleotides. This Helicobacter pylori (strain P12) protein is Exodeoxyribonuclease 7 large subunit.